Reading from the N-terminus, the 223-residue chain is Ribosomal RNA small subunit methyltransferase G (223 aa).

Residues Gly85, Phe90, and Arg154 each coordinate S-adenosyl-L-methionine.

This sequence belongs to the methyltransferase superfamily. RNA methyltransferase RsmG family.

It is found in the cytoplasm. It carries out the reaction guanosine(527) in 16S rRNA + S-adenosyl-L-methionine = N(7)-methylguanosine(527) in 16S rRNA + S-adenosyl-L-homocysteine. Specifically methylates the N7 position of guanine in position 527 of 16S rRNA. The polypeptide is Ribosomal RNA small subunit methyltransferase G (Rhodopseudomonas palustris (strain TIE-1)).